A 94-amino-acid chain; its full sequence is Large ribosomal subunit protein uL29 (94 aa).

The tract at residues 65–94 is disordered; the sequence is ANPGERKSRVFSRAKRKKKNLARLSAKAKG. Residues 73–94 show a composition bias toward basic residues; it reads RVFSRAKRKKKNLARLSAKAKG.

The protein belongs to the universal ribosomal protein uL29 family.

The polypeptide is Large ribosomal subunit protein uL29 (Leptospira interrogans serogroup Icterohaemorrhagiae serovar copenhageni (strain Fiocruz L1-130)).